The following is a 223-amino-acid chain: Proteasome subunit beta type-1 (223 aa).

Belongs to the peptidase T1B family. The 26S proteasome consists of a 20S proteasome core and two 19S regulatory subunits. The 20S proteasome core is composed of 28 subunits that are arranged in four stacked rings, resulting in a barrel-shaped structure. The two end rings are each formed by seven alpha subunits, and the two central rings are each formed by seven beta subunits. The catalytic chamber with the active sites is on the inside of the barrel.

It is found in the cytoplasm. The protein resides in the nucleus. Functionally, non-catalytic component of the proteasome, a multicatalytic proteinase complex which is characterized by its ability to cleave peptides with Arg, Phe, Tyr, Leu, and Glu adjacent to the leaving group at neutral or slightly basic pH. The proteasome has an ATP-dependent proteolytic activity. The sequence is that of Proteasome subunit beta type-1 (PBF1) from Petunia hybrida (Petunia).